The primary structure comprises 86 residues: uncharacterized protein (86 aa).

The chain crosses the membrane as a helical span at residues leucine 4–isoleucine 24.

It localises to the membrane. This is an uncharacterized protein from Haemophilus influenzae (strain ATCC 51907 / DSM 11121 / KW20 / Rd).